The following is a 1179-amino-acid chain: ATP-dependent helicase/deoxyribonuclease subunit B (1179 aa).

The protein belongs to the helicase family. AddB/RexB type 2 subfamily. As to quaternary structure, heterodimer of AddA and RexB. Requires Mg(2+) as cofactor.

Functionally, the heterodimer acts as both an ATP-dependent DNA helicase and an ATP-dependent, dual-direction single-stranded exonuclease. Recognizes the chi site generating a DNA molecule suitable for the initiation of homologous recombination. This subunit has 5' -&gt; 3' nuclease activity but not helicase activity. This is ATP-dependent helicase/deoxyribonuclease subunit B from Lacticaseibacillus casei (strain BL23) (Lactobacillus casei).